A 1148-amino-acid polypeptide reads, in one-letter code: Protein pianissimo A (1148 aa).

Positions methionine 1 to asparagine 34 are enriched in low complexity. Residues methionine 1–serine 41 form a disordered region. The 112-residue stretch at lysine 803–histidine 914 folds into the N-terminal Ras-GEF domain.

The protein belongs to the RICTOR family. Part of a complex, TORC2, consisting of tor, lst8, piaA and ripA. Additional proteins, such as 14-3-3 and heat-shock proteins, may also belong to the TORC2 complex.

It is found in the cytoplasm. Regulates cell growth, chemotaxis, signal relay and the actin cytoskeleton. Required for chemoattractant receptor and G protein-mediated activation of the 12 transmembrane domain adenylyl cyclase. Functions as a part of protein complex TORC2. TORC2, is presumed to be indirectly negatively modulated by rapamycin and regulates actin polarization. TORC2, but not TORC1, negatively regulates phagocytosis. This protein and dagA protein CRAC, a cytosolic regulator, are both essential for activation of the enzyme adenylyl cyclase. This protein and CRAC do not function redundantly. Both proteins are integral components of the adenylyl cyclase activation pathway. The sequence is that of Protein pianissimo A (piaA) from Dictyostelium discoideum (Social amoeba).